Reading from the N-terminus, the 344-residue chain is L-threonine 3-dehydrogenase (344 aa).

Residue Cys-38 coordinates Zn(2+). Residues Thr-40 and His-43 each act as charge relay system in the active site. Zn(2+)-binding residues include His-63, Glu-64, Cys-93, Cys-96, Cys-99, and Cys-107. Residues Ile-175, Asp-195, Arg-200, 263–265 (LGI), and 287–288 (IY) contribute to the NAD(+) site.

It belongs to the zinc-containing alcohol dehydrogenase family. In terms of assembly, homotetramer. The cofactor is Zn(2+).

The protein resides in the cytoplasm. It catalyses the reaction L-threonine + NAD(+) = (2S)-2-amino-3-oxobutanoate + NADH + H(+). The protein operates within amino-acid degradation; L-threonine degradation via oxydo-reductase pathway; glycine from L-threonine: step 1/2. Catalyzes the NAD(+)-dependent oxidation of L-threonine to 2-amino-3-ketobutyrate. The polypeptide is L-threonine 3-dehydrogenase (Deinococcus deserti (strain DSM 17065 / CIP 109153 / LMG 22923 / VCD115)).